A 493-amino-acid chain; its full sequence is Glutamyl-tRNA(Gln) amidotransferase subunit A (493 aa).

Residues Lys-78 and Ser-158 each act as charge relay system in the active site. The active-site Acyl-ester intermediate is the Ser-182.

Belongs to the amidase family. GatA subfamily. In terms of assembly, heterotrimer of A, B and C subunits.

The catalysed reaction is L-glutamyl-tRNA(Gln) + L-glutamine + ATP + H2O = L-glutaminyl-tRNA(Gln) + L-glutamate + ADP + phosphate + H(+). In terms of biological role, allows the formation of correctly charged Gln-tRNA(Gln) through the transamidation of misacylated Glu-tRNA(Gln) in organisms which lack glutaminyl-tRNA synthetase. The reaction takes place in the presence of glutamine and ATP through an activated gamma-phospho-Glu-tRNA(Gln). The polypeptide is Glutamyl-tRNA(Gln) amidotransferase subunit A (Methylorubrum extorquens (strain PA1) (Methylobacterium extorquens)).